The sequence spans 460 residues: Argininosuccinate lyase (460 aa).

The protein belongs to the lyase 1 family. Argininosuccinate lyase subfamily.

It localises to the cytoplasm. The catalysed reaction is 2-(N(omega)-L-arginino)succinate = fumarate + L-arginine. The protein operates within amino-acid biosynthesis; L-arginine biosynthesis; L-arginine from L-ornithine and carbamoyl phosphate: step 3/3. In Staphylococcus haemolyticus (strain JCSC1435), this protein is Argininosuccinate lyase.